A 70-amino-acid chain; its full sequence is ATP synthase subunit c (70 aa).

The next 2 helical transmembrane spans lie at 4 to 24 and 45 to 65; these read IAAA…NGLI and IMFI…VIAF.

Belongs to the ATPase C chain family. F-type ATPases have 2 components, F(1) - the catalytic core - and F(0) - the membrane proton channel. F(1) has five subunits: alpha(3), beta(3), gamma(1), delta(1), epsilon(1). F(0) has three main subunits: a(1), b(2) and c(10-14). The alpha and beta chains form an alternating ring which encloses part of the gamma chain. F(1) is attached to F(0) by a central stalk formed by the gamma and epsilon chains, while a peripheral stalk is formed by the delta and b chains.

Its subcellular location is the cell membrane. Functionally, f(1)F(0) ATP synthase produces ATP from ADP in the presence of a proton or sodium gradient. F-type ATPases consist of two structural domains, F(1) containing the extramembraneous catalytic core and F(0) containing the membrane proton channel, linked together by a central stalk and a peripheral stalk. During catalysis, ATP synthesis in the catalytic domain of F(1) is coupled via a rotary mechanism of the central stalk subunits to proton translocation. Its function is as follows. Key component of the F(0) channel; it plays a direct role in translocation across the membrane. A homomeric c-ring of between 10-14 subunits forms the central stalk rotor element with the F(1) delta and epsilon subunits. The sequence is that of ATP synthase subunit c from Staphylococcus aureus (strain Mu3 / ATCC 700698).